The primary structure comprises 370 residues: Queuine tRNA-ribosyltransferase (370 aa).

Asp-89 (proton acceptor) is an active-site residue. Substrate-binding positions include Asp-89 to Phe-93, Asp-143, Gln-185, and Gly-212. Positions Gly-243–Asp-249 are RNA binding. Asp-262 acts as the Nucleophile in catalysis. The interval Thr-267 to Arg-271 is RNA binding; important for wobble base 34 recognition. Cys-300, Cys-302, Cys-305, and His-331 together coordinate Zn(2+).

Belongs to the queuine tRNA-ribosyltransferase family. In terms of assembly, homodimer. Within each dimer, one monomer is responsible for RNA recognition and catalysis, while the other monomer binds to the replacement base PreQ1. Zn(2+) is required as a cofactor.

It catalyses the reaction 7-aminomethyl-7-carbaguanine + guanosine(34) in tRNA = 7-aminomethyl-7-carbaguanosine(34) in tRNA + guanine. Its pathway is tRNA modification; tRNA-queuosine biosynthesis. Functionally, catalyzes the base-exchange of a guanine (G) residue with the queuine precursor 7-aminomethyl-7-deazaguanine (PreQ1) at position 34 (anticodon wobble position) in tRNAs with GU(N) anticodons (tRNA-Asp, -Asn, -His and -Tyr). Catalysis occurs through a double-displacement mechanism. The nucleophile active site attacks the C1' of nucleotide 34 to detach the guanine base from the RNA, forming a covalent enzyme-RNA intermediate. The proton acceptor active site deprotonates the incoming PreQ1, allowing a nucleophilic attack on the C1' of the ribose to form the product. After dissociation, two additional enzymatic reactions on the tRNA convert PreQ1 to queuine (Q), resulting in the hypermodified nucleoside queuosine (7-(((4,5-cis-dihydroxy-2-cyclopenten-1-yl)amino)methyl)-7-deazaguanosine). This chain is Queuine tRNA-ribosyltransferase, found in Hydrogenovibrio crunogenus (strain DSM 25203 / XCL-2) (Thiomicrospira crunogena).